The sequence spans 526 residues: Osmo-independent choline transporter BetT1 (526 aa).

At 1 to 17 (MWSKRDEQKTYPPIRLN) the chain is on the cytoplasmic side. The helical transmembrane segment at 18–38 (PFVFWSSAISISIFGMLFVLF) threads the bilayer. Over 39-56 (PETSQHGLTWIQQQVNQL) the chain is Periplasmic. Residues 57–77 (FGWYYMLVIILSLGFVAWLAF) form a helical membrane-spanning segment. Topologically, residues 78–93 (SQVGNIPLGKAQDKPE) are cytoplasmic. Residues 94–114 (FGYLVWTSMLFSAGIGIALLY) traverse the membrane as a helical segment. The Periplasmic portion of the chain corresponds to 115–148 (YGVAEPVDHFLRPPEGQGGTVEAAQNAMMYSFLH). The helical transmembrane segment at 149-169 (WGIHGWVLYALVGVTLGYFAF) threads the bilayer. Over 170–200 (RRDLPLALRSALYPIFGERIHGLVGHMVDGF) the chain is Cytoplasmic. Residues 201–221 (GILATIISLVTNLGIGALVMI) traverse the membrane as a helical segment. The Periplasmic portion of the chain corresponds to 222 to 236 (SGISYLFPDLPNTSS). A helical transmembrane segment spans residues 237–257 (TLVVTVIMMMLVATLTTVIGI). The Cytoplasmic segment spans residues 258–272 (EKGLAWLSRINLRLL). The chain crosses the membrane as a helical span at residues 273–293 (YLLLLFVFLTGPTNHLLNGLV). At 294 to 323 (QNTGDYLSHFVQKSFDLYLYDKNATGWLAS) the chain is on the periplasmic side. A helical membrane pass occupies residues 324 to 344 (WTIFYWAWWIAWAPFVGMFIA). At 345–354 (RISKGRTIRE) the chain is on the cytoplasmic side. The chain crosses the membrane as a helical span at residues 355–375 (VVLGVCLIPLGFTLAWISIFG). Over 376–417 (NTAIDLILNHGQQIIGSLVIQDPALSLFKLLEYLPFHPYVAG) the chain is Periplasmic. The chain crosses the membrane as a helical span at residues 418 to 438 (IVVVICFVLFLTPVGSGTLMI). The Cytoplasmic portion of the chain corresponds to 439-457 (ANLSSQGGSSDSDSPIWLR). The helical transmembrane segment at 458–478 (VFWSIAITIVSIGLLLAGSFS) threads the bilayer. At 479–482 (AMQS) the chain is on the periplasmic side. The chain crosses the membrane as a helical span at residues 483–503 (AVVLCGLPFSVILLLYMFGLA). Residues 504–526 (KALKQETQQPVVESHTTETSGSD) lie on the Cytoplasmic side of the membrane.

Belongs to the BCCT transporter (TC 2.A.15) family.

Its subcellular location is the cell inner membrane. Sodium-independent high-affinity choline uptake system. Uptake is not proton coupled. May play a role in metabolic adaptation to choline-containing environments. This chain is Osmo-independent choline transporter BetT1, found in Acinetobacter baylyi (strain ATCC 33305 / BD413 / ADP1).